We begin with the raw amino-acid sequence, 336 residues long: Transmembrane protein 19 (336 aa).

6 consecutive transmembrane segments (helical) span residues 19–39, 49–69, 86–106, 224–244, 250–270, and 313–333; these read IVILCMILCISLSFWIISITA, ISPWRWLVSVLTPIIIVWHGI, GFILTIANYSFFSALLTFFFI, ISSLLGGTSVGVAYFVTQLIF, IAAPQWPIVIYGGMAGLLGSL, and VNLFSSILIALLLPTAAWSFW.

This sequence belongs to the TMEM19 family.

It is found in the membrane. In Xenopus tropicalis (Western clawed frog), this protein is Transmembrane protein 19 (tmem19).